The sequence spans 345 residues: Endochitinase 4 (345 aa).

An N-terminal signal peptide occupies residues 1-27 (MAPLLNTGLVILPLIVSTLLGPMPAFA). N-linked (GlcNAc...) asparagine glycans are attached at residues asparagine 29 and asparagine 89. Residues 41–345 (KVLQGYWENW…TFGDNVKGRL (305 aa)) form the GH18 domain. Glutamate 163 serves as the catalytic Proton donor. N-linked (GlcNAc...) asparagine glycosylation occurs at asparagine 316.

The protein belongs to the glycosyl hydrolase 18 family. Chitinase class V subfamily.

It is found in the secreted. The catalysed reaction is Random endo-hydrolysis of N-acetyl-beta-D-glucosaminide (1-&gt;4)-beta-linkages in chitin and chitodextrins.. Functionally, secreted chitinase involved in the degradation of chitin, a component of the cell walls of fungi and exoskeletal elements of some animals (including worms and arthropods). Participates in the infection process and directly acts in the penetration process of the host cuticle. The polypeptide is Endochitinase 4 (chi4) (Metarhizium robertsii (strain ARSEF 23 / ATCC MYA-3075) (Metarhizium anisopliae (strain ARSEF 23))).